Reading from the N-terminus, the 288-residue chain is Pyridoxal kinase PdxY (288 aa).

Substrate is bound by residues Ser-12 and 47–48 (TQ). ATP is bound by residues Asp-114, Glu-151, Lys-184, and 211–214 (RPLL). Residue Asp-225 participates in substrate binding.

The protein belongs to the pyridoxine kinase family. PdxY subfamily. In terms of assembly, homodimer. The cofactor is Mg(2+).

The catalysed reaction is pyridoxal + ATP = pyridoxal 5'-phosphate + ADP + H(+). The protein operates within cofactor metabolism; pyridoxal 5'-phosphate salvage; pyridoxal 5'-phosphate from pyridoxal: step 1/1. Its function is as follows. Pyridoxal kinase involved in the salvage pathway of pyridoxal 5'-phosphate (PLP). Catalyzes the phosphorylation of pyridoxal to PLP. This is Pyridoxal kinase PdxY from Pseudomonas syringae pv. syringae (strain B728a).